A 262-amino-acid chain; its full sequence is Putative hydro-lyase ROP_32680 (262 aa).

This sequence belongs to the D-glutamate cyclase family.

This Rhodococcus opacus (strain B4) protein is Putative hydro-lyase ROP_32680.